The chain runs to 289 residues: Protease HtpX homolog (289 aa).

2 consecutive transmembrane segments (helical) span residues 9–29 (TGVLMAFLTALLVGIGYLIGG) and 31–51 (GGMIIAFTIALFMNLISYWFS). His-133 is a binding site for Zn(2+). Residue Glu-134 is part of the active site. A Zn(2+)-binding site is contributed by His-137. 2 helical membrane-spanning segments follow: residues 143–163 (TLIQTLAAVLAGAIMILVDFA) and 182–202 (IGLILAIVLAPLAATLIQLAI). Glu-207 is a binding site for Zn(2+).

It belongs to the peptidase M48B family. Requires Zn(2+) as cofactor.

The protein localises to the cell membrane. The polypeptide is Protease HtpX homolog (Pyrococcus abyssi (strain GE5 / Orsay)).